The sequence spans 606 residues: R-linalool synthase, chloroplastic (606 aa).

The N-terminal 51 residues, 1 to 51 (MCTIISVNHHHVAILSKPKVKLFHTKNKRSASINLPWSLSPSSSAASRPIS), are a transit peptide targeting the chloroplast. (2E)-geranyl diphosphate is bound by residues Arg326, Asp363, Asp367, Arg504, and Asp507. Mg(2+)-binding residues include Asp363 and Asp367. Residues 363–367 (DDVYD) carry the DDXXD motif motif. 3 residues coordinate Mg(2+): Asp507, Thr511, and Glu515.

The protein belongs to the terpene synthase family. Tpsb subfamily. Requires Mg(2+) as cofactor. Mn(2+) serves as cofactor.

The protein localises to the plastid. Its subcellular location is the chloroplast. It catalyses the reaction (2E)-geranyl diphosphate + H2O = (R)-linalool + diphosphate. Its pathway is secondary metabolite biosynthesis; terpenoid biosynthesis. Its function is as follows. Monoterpene synthase that catalyzes the formation of (3R)-linalool from geranyl diphosphate, but not from farnesyl diphosphate or geranylgeranyl diphosphate. This chain is R-linalool synthase, chloroplastic, found in Mentha aquatica (Water mint).